The sequence spans 316 residues: 4-hydroxy-3-methylbut-2-enyl diphosphate reductase (316 aa).

[4Fe-4S] cluster is bound at residue C12. The (2E)-4-hydroxy-3-methylbut-2-enyl diphosphate site is built by H41 and H74. Positions 41 and 74 each coordinate dimethylallyl diphosphate. Residues H41 and H74 each contribute to the isopentenyl diphosphate site. [4Fe-4S] cluster is bound at residue C96. Residue H124 participates in (2E)-4-hydroxy-3-methylbut-2-enyl diphosphate binding. H124 is a dimethylallyl diphosphate binding site. Isopentenyl diphosphate is bound at residue H124. E126 acts as the Proton donor in catalysis. T167 is a binding site for (2E)-4-hydroxy-3-methylbut-2-enyl diphosphate. Residue C197 coordinates [4Fe-4S] cluster. Positions 225, 226, 227, and 269 each coordinate (2E)-4-hydroxy-3-methylbut-2-enyl diphosphate. S225, S226, N227, and S269 together coordinate dimethylallyl diphosphate. S225, S226, N227, and S269 together coordinate isopentenyl diphosphate.

This sequence belongs to the IspH family. In terms of assembly, homodimer. [4Fe-4S] cluster serves as cofactor.

It carries out the reaction isopentenyl diphosphate + 2 oxidized [2Fe-2S]-[ferredoxin] + H2O = (2E)-4-hydroxy-3-methylbut-2-enyl diphosphate + 2 reduced [2Fe-2S]-[ferredoxin] + 2 H(+). The enzyme catalyses dimethylallyl diphosphate + 2 oxidized [2Fe-2S]-[ferredoxin] + H2O = (2E)-4-hydroxy-3-methylbut-2-enyl diphosphate + 2 reduced [2Fe-2S]-[ferredoxin] + 2 H(+). It functions in the pathway isoprenoid biosynthesis; dimethylallyl diphosphate biosynthesis; dimethylallyl diphosphate from (2E)-4-hydroxy-3-methylbutenyl diphosphate: step 1/1. The protein operates within isoprenoid biosynthesis; isopentenyl diphosphate biosynthesis via DXP pathway; isopentenyl diphosphate from 1-deoxy-D-xylulose 5-phosphate: step 6/6. Catalyzes the conversion of 1-hydroxy-2-methyl-2-(E)-butenyl 4-diphosphate (HMBPP) into a mixture of isopentenyl diphosphate (IPP) and dimethylallyl diphosphate (DMAPP). Acts in the terminal step of the DOXP/MEP pathway for isoprenoid precursor biosynthesis. This chain is 4-hydroxy-3-methylbut-2-enyl diphosphate reductase, found in Salmonella typhi.